The following is a 59-amino-acid chain: Large ribosomal subunit protein bL32 (59 aa).

Residues 1–59 are disordered; sequence MAVQQNKKSPSKRGMHRSHDALTAPALSVDSTTGEVHRPHHISPNGMYRGRKVVKVKGE. Positions 49–59 are enriched in basic residues; it reads RGRKVVKVKGE.

This sequence belongs to the bacterial ribosomal protein bL32 family.

The sequence is that of Large ribosomal subunit protein bL32 (rpmF) from Neisseria meningitidis serogroup A / serotype 4A (strain DSM 15465 / Z2491).